We begin with the raw amino-acid sequence, 254 residues long: MLSGLVTALRTLTALPVPGRDAERFSSSLYWFPVVGLVIGGIVVLLARAGMGVGWPELAAVLALLGGLILTRGLHADGLADLADGFFGGRTREAALRIMKDPNVGSFGSLALIGVMLFKWICLLELARAEAYGMIAAGAVLSRTAQVLLAARMPYARSDGGTAMAFVEDAGWPHLLVASISGVVLLFVLLDWQLAPSLILLFGSVVALFFVGWLSHRKIGGITGDVLGACSELVEAAVWLLAALWLKGLFWAIA.

7 helical membrane passes run 27–47 (SSLY…VLLA), 50–70 (GMGV…GLIL), 104–124 (VGSF…ICLL), 131–151 (AYGM…LLAA), 170–190 (AGWP…FVLL), 194–214 (LAPS…VGWL), and 233–253 (LVEA…FWAI).

The protein belongs to the CobS family. It depends on Mg(2+) as a cofactor.

The protein resides in the cell inner membrane. It carries out the reaction alpha-ribazole + adenosylcob(III)inamide-GDP = adenosylcob(III)alamin + GMP + H(+). The enzyme catalyses alpha-ribazole 5'-phosphate + adenosylcob(III)inamide-GDP = adenosylcob(III)alamin 5'-phosphate + GMP + H(+). Its pathway is cofactor biosynthesis; adenosylcobalamin biosynthesis; adenosylcobalamin from cob(II)yrinate a,c-diamide: step 7/7. Its function is as follows. Joins adenosylcobinamide-GDP and alpha-ribazole to generate adenosylcobalamin (Ado-cobalamin). Also synthesizes adenosylcobalamin 5'-phosphate from adenosylcobinamide-GDP and alpha-ribazole 5'-phosphate. The protein is Adenosylcobinamide-GDP ribazoletransferase of Chlorobaculum tepidum (strain ATCC 49652 / DSM 12025 / NBRC 103806 / TLS) (Chlorobium tepidum).